Here is a 178-residue protein sequence, read N- to C-terminus: Nuclear transcription factor Y subunit B-2 (178 aa).

Residues 39 to 45 mediate DNA binding; that stretch reads LPIANIS. A subunit association domain (SAD) region spans residues 66–77; that stretch reads LQECVSEFISFV. The interval 131 to 156 is disordered; it reads SSKAGDGSVKKDTIGPHSGASSSSAQ.

This sequence belongs to the NFYB/HAP3 subunit family. In terms of assembly, heterotrimeric transcription factor composed of three components, NF-YA, NF-YB and NF-YC. NF-YB and NF-YC must interact and dimerize for NF-YA association and DNA binding. Interacts with NFYC4 and NFYC6. Ubiquitous.

The protein localises to the nucleus. In terms of biological role, component of the NF-Y/HAP transcription factor complex. The NF-Y complex stimulates the transcription of various genes by recognizing and binding to a CCAAT motif in promoters. May regulate the expression of photosynthetic genes, and may be involved in chloroplast and amyloplast development. In Oryza sativa subsp. japonica (Rice), this protein is Nuclear transcription factor Y subunit B-2 (NFYB2).